A 183-amino-acid polypeptide reads, in one-letter code: Small ribosomal subunit protein uS4c (183 aa).

Residues methionine 82–asparagine 143 form the S4 RNA-binding domain.

Belongs to the universal ribosomal protein uS4 family. As to quaternary structure, part of the 30S ribosomal subunit. Contacts protein S5. The interaction surface between S4 and S5 is involved in control of translational fidelity.

It localises to the plastid. It is found in the chloroplast. Functionally, one of the primary rRNA binding proteins, it binds directly to 16S rRNA where it nucleates assembly of the body of the 30S subunit. In terms of biological role, with S5 and S12 plays an important role in translational accuracy. The chain is Small ribosomal subunit protein uS4c (rps4) from Schizorhiza neglecta (Lapeirousia neglecta).